Consider the following 662-residue polypeptide: Hypoxia-inducible factor 3-alpha (662 aa).

The disordered stretch occupies residues M1–R25. Residues L12–H65 enclose the bHLH domain. The nuclear localization signal (isoform 2) stretch occupies residues Q75 to L98. PAS domains lie at G80–S150 and P225–G295. The segment at A228–A272 is nuclear export signal (isoform 2). Disordered stretches follow at residues E352 to V377 and P416 to D446. Positions M414–L418 match the LRRLL motif. Low complexity predominate over residues T426–Q437. The segment at L448–E581 is ODD. Positions V450–E501 are NTAD. Residue K463 forms a Glycyl lysine isopeptide (Lys-Gly) (interchain with G-Cter in ubiquitin) linkage. Residues L485 to D492 carry the LAPYISMD motif. Residue P487 is modified to 4-hydroxyproline. Residues S500–S595 form a disordered region. The span at K505–S521 shows a compositional bias: basic residues. K565 participates in a covalent cross-link: Glycyl lysine isopeptide (Lys-Gly) (interchain with G-Cter in ubiquitin). Residues S572–P584 are compositionally biased toward basic and acidic residues.

In terms of assembly, isoform 1 interacts with ARNT. Isoform 2 interacts with HIF1A. Isoform 2 interacts EPAS1. Isoform 2 interacts (via C-terminus domain) with BAD; the interaction reduces the binding between BAD and BAX. Isoform 2 (via C-terminus domain) interacts with BCL2L2 and MCL1. Interacts with VHL. In terms of processing, in normoxia, hydroxylated on Pro-487 in the oxygen-dependent degradation domain (ODD) by PHD. The hydroxylated proline promotes interaction with VHL, initiating rapid ubiquitination and subsequent proteasomal degradation. Post-translationally, ubiquitinated; ubiquitination occurs in a VHL- and oxygen-dependent pathway and subsequently targeted for proteasomal degradation. In terms of tissue distribution, isoform 3 is expressed in endothelial cells of vessels and capillaries in alveoli of the neonatal lung (at protein level). Expressed in lung, brain, heart and kidney. Isoform 2 is expressed in heart and lung. Isoform 2 is highly expressed in the epithelial cell layer of the cornea with lower expression in the layers of ganglion cells, inner nuclear cells, and rods and cones of the retina. Isoform 2 is expressed in the cerebellum only in the Purkinje cell layer.

Its subcellular location is the nucleus. It localises to the cytoplasm. The protein localises to the nucleus speckle. The protein resides in the mitochondrion. Functionally, acts as a transcriptional regulator in adaptive response to low oxygen tension. Acts as a regulator of hypoxia-inducible gene expression. Plays a role in the development of the cardiorespiratory system. Acts as a positive regulator of hypoxia-inducible gene expression. Associates to core DNA sequence 5'-TACGTG-3' within the hypoxia response element (HRE) of target gene promoters in a ARNT-dependent manner, and hence also participates in the transcriptional activation of reporter genes driven by HRE. Its function is as follows. Attenuates the ability of transcription factor HIF1A, EPAS1 and the HIF1A-ARNT complex to bind to hypoxia-responsive elements (HRE) located within the enhancer/promoter of hypoxia-inducible target genes and hence inhibits HRE-driven transcriptional activation. Functions as an inhibitor of angiogenesis in hypoxic cells of the cornea. May act as a tumor suppressor. May also be involved in apoptosis. In terms of biological role, attenuates the ability of transcription factor HIF1A, EPAS1 and the HIF1A-ARNT complex to bind to hypoxia-responsive elements (HRE) located within the enhancer/promoter of hypoxia-inducible target genes and hence inhibits HRE-driven transcriptional activation. Also plays a role in the development of the lung and heart during embryonic and neonatal stages. The sequence is that of Hypoxia-inducible factor 3-alpha from Mus musculus (Mouse).